The sequence spans 714 residues: Fimbrin-3 (714 aa).

The region spanning 7–55 is the EF-hand domain; the sequence is VIVSDPWLQSQLTQVELRSLNSKFVALKNQSGKVTLEDLPSVLVKVKSL. Calponin-homology (CH) domains follow at residues 124-241, 269-372, 393-499, and 514-622; these read QSEK…KIQL, LPPE…HERN, CRDE…RTHM, and DMTD…YWSL. 2 actin-binding regions span residues 124-372 and 393-622; these read QSEK…HERN and CRDE…YWSL. A compositionally biased stretch (low complexity) spans 628–662; it reads SSESSSSSSDSSSTHSTTTTCTSTCTSTDASPAPS. Residues 628–694 are disordered; that stretch reads SSESSSSSSD…NEVSSLTIEE (67 aa). The span at 670-680 shows a compositional bias: polar residues; the sequence is SSLNGEVSSLT. Positions 681-694 are enriched in acidic residues; it reads IEEDNEVSSLTIEE.

In terms of assembly, interacts with F-actin.

Its subcellular location is the cytoplasm. The protein localises to the cytoskeleton. In terms of biological role, cross-links actin filaments (F-actin). Stabilizes and prevents F-actin depolymerization mediated by profilin. May regulate actin cytoarchitecture, cell cycle, cell division, cell elongation and cytoplasmic tractus. In Arabidopsis thaliana (Mouse-ear cress), this protein is Fimbrin-3.